A 527-amino-acid chain; its full sequence is Serine/threonine-protein kinase NLK (527 aa).

Sufficient for interaction with DAPK3 stretches follow at residues 1–125 (MSLC…KAHH) and 124–416 (HHHQ…SKRI). Required for interaction with TAB2 regions lie at residues 1–304 (MSLC…VVTQ) and 434–527 (YHTC…LVWE). Disordered regions lie at residues 22-72 (AAAA…SSAA) and 90-140 (QQPY…DIEP). The segment covering 26-54 (GHHHHHHHHLPHLPPPHLHHHHHPQHHLH) has biased composition (basic residues). Residues 103–119 (PGPAAAAPAQVQAAAAA) show a composition bias toward low complexity. Basic residues predominate over residues 122–131 (KAHHHQHSHH). The Protein kinase domain occupies 138–427 (IEPDRPIGYG…AKDALAHPYL (290 aa)). ATP-binding positions include 144-152 (IGYGAFGVV) and Lys167. Asp264 acts as the Proton acceptor in catalysis. Thr298 carries the post-translational modification Phosphothreonine; by autocatalysis. The TQE signature appears at 298 to 300 (TQE). Positions 428-527 (DEGRLRYHTC…EMPPSPLVWE (100 aa)) are required for homodimerization and kinase activation and localization to the nucleus. The residue at position 522 (Ser522) is a Phosphoserine.

This sequence belongs to the protein kinase superfamily. CMGC Ser/Thr protein kinase family. MAP kinase subfamily. In terms of assembly, homodimer. Homodimerization is required for intermolecular autophosphorylation, kinase activation and nuclear localization. May interact with components of cullin-RING-based SCF (SKP1-CUL1-F-box protein) E3 ubiquitin-protein ligase complexes. Interacts with LEF1, MEF2A, MYBL1 and MYBL2. Interacts with the upstream activating kinases HIPK2 and MAP3K7/TAK1. Interaction with MAP3K7/TAK1 seems to be indirect, and may be mediated by other proteins such as STAT3, TAB1 and TAB2. Interacts with and phosphorylates a number of transcription factors including FOXO1, FOXO3, FOXO4, MYB, NOTCH1 and TCF7L2/TCF4. Interacts with DAPK3/ZIPK, and this interaction may disrupt interaction with transcription factors such as TCF7L2/TCF4. Interacts with RNF138/NARF. Interacts with ATF5; the interaction stabilizes ATF5 at the protein level in a kinase-independent manner. Requires Mg(2+) as cofactor. Post-translationally, phosphorylated on Thr-298. Intermolecular autophosphorylation on Thr-298 activates the enzyme.

It localises to the nucleus. The protein resides in the cytoplasm. It carries out the reaction L-seryl-[protein] + ATP = O-phospho-L-seryl-[protein] + ADP + H(+). The catalysed reaction is L-threonyl-[protein] + ATP = O-phospho-L-threonyl-[protein] + ADP + H(+). Its activity is regulated as follows. Activated by dimerization and subsequent intermolecular autophosphorylation on Thr-298. Activated by the non-canonical Wnt signaling pathway, in which WNT5A treatment leads to activation of MAP3K7/TAK1 and HIPK2, which subsequently phosphorylates and activates this protein. Other cytokines such as IL6 may also activate this regulatory circuit. In terms of biological role, serine/threonine-protein kinase that regulates a number of transcription factors with key roles in cell fate determination. Positive effector of the non-canonical Wnt signaling pathway, acting downstream of WNT5A, MAP3K7/TAK1 and HIPK2. Negative regulator of the canonical Wnt/beta-catenin signaling pathway. Binds to and phosphorylates TCF7L2/TCF4 and LEF1, promoting the dissociation of the TCF7L2/LEF1/beta-catenin complex from DNA, as well as the ubiquitination and subsequent proteolysis of LEF1. Together these effects inhibit the transcriptional activation of canonical Wnt/beta-catenin target genes. Negative regulator of the Notch signaling pathway. Binds to and phosphorylates NOTCH1, thereby preventing the formation of a transcriptionally active ternary complex of NOTCH1, RBPJ/RBPSUH and MAML1. Negative regulator of the MYB family of transcription factors. Phosphorylation of MYB leads to its subsequent proteolysis while phosphorylation of MYBL1 and MYBL2 inhibits their interaction with the coactivator CREBBP. Other transcription factors may also be inhibited by direct phosphorylation of CREBBP itself. Acts downstream of IL6 and MAP3K7/TAK1 to phosphorylate STAT3, which is in turn required for activation of NLK by MAP3K7/TAK1. Upon IL1B stimulus, cooperates with ATF5 to activate the transactivation activity of C/EBP subfamily members. Phosphorylates ATF5 but also stabilizes ATF5 protein levels in a kinase-independent manner. Acts as an inhibitor of the mTORC1 complex in response to osmotic stress by mediating phosphorylation of RPTOR, thereby preventing recruitment of the mTORC1 complex to lysosomes. The chain is Serine/threonine-protein kinase NLK (NLK) from Homo sapiens (Human).